Reading from the N-terminus, the 429-residue chain is MGNHLPLLPAESEEEDEMEVEDQDSKEAKKPNIINFDTSLPTSHTYLGADMEEFHGRTLHDDDSCQVIPVLPQVMMILIPGQTLPLQLFHPQEVSMVRNLIQKDRTFAVLAYSNIQEREAQFGTTAEIYAYREEQDFGIEIVKVKAIGRQRFKVLELRTQSDGIQQAKVQILPECVLPSTMSAVQLESLNKCQIFPPKPVSREDQCSYKWWQKYQKRKFHCANLTSWPRWLYSLYDAETLMDRIKKQLREWDENLKDDSLPSNPIDFSYRVAACLPIDDVLRIQLLKIGSAIQRLRCELDIMNKCTSLCCKQCQETEITTKNEIFSLSLCGPMAAYVNPHGYVHETLTVYKACNLNLIGRPSTEHSWFPGYAWTVAQCKICASHIGWKFTATKKDMSPQKFWGLTRSALLPTIPDTEDELSPDKVILCL.

The interval 1 to 30 is disordered; sequence MGNHLPLLPAESEEEDEMEVEDQDSKEAKK. Positions 11 to 22 are enriched in acidic residues; sequence ESEEEDEMEVED. Ser12 carries the post-translational modification Phosphoserine. The region spanning 68–306 is the Lon N-terminal domain; the sequence is IPVLPQVMMI…CELDIMNKCT (239 aa). The CULT domain occupies 305 to 413; that stretch reads CTSLCCKQCQ…LTRSALLPTI (109 aa). Positions 310 and 313 each coordinate Zn(2+). 3 residues coordinate (S)-thalidomide: His365, Trp367, and Trp373. 2 residues coordinate Zn(2+): Cys378 and Cys381.

It belongs to the CRBN family. Component of a DCX (DDB1-CUL4-X-box) protein ligase complex, at least composed of CRBN, CUL4A, DDB1 and RBX1. Interacts directly with DDB1. Interacts with KCNT1. Interacts with ILF2. Interacts with TRAF6 and ECSIT. Post-translationally, ubiquitinated, ubiquitination is mediated by its own DCX protein ligase complex.

Its subcellular location is the cytoplasm. It is found in the nucleus. The protein resides in the membrane. It participates in protein modification; protein ubiquitination. Its function is as follows. Substrate recognition component of a DCX (DDB1-CUL4-X-box) E3 protein ligase complex that mediates the ubiquitination and subsequent proteasomal degradation of target proteins, such as MEIS2, ILF2 or GLUL. Normal degradation of key regulatory proteins is required for normal limb outgrowth and expression of the fibroblast growth factor FGF8. Maintains presynaptic glutamate release and consequently cognitive functions, such as memory and learning, by negatively regulating large-conductance calcium-activated potassium (BK) channels in excitatory neurons. Likely to function by regulating the assembly and neuronal surface expression of BK channels via its interaction with KCNT1. May also be involved in regulating anxiety-like behaviors via a BK channel-independent mechanism. Plays a negative role in TLR4 signaling by interacting with TRAF6 and ECSIT, leading to inhibition of ECSIT ubiquitination, an important step of the signaling. This is Protein cereblon (CRBN) from Pongo abelii (Sumatran orangutan).